The following is a 295-amino-acid chain: Ubiquitin-conjugating enzyme E2-34 kDa (295 aa).

The region spanning 7–169 is the UBC core domain; the sequence is TASSLLLRQY…VKMEVERSKQ (163 aa). The active-site Glycyl thioester intermediate is the cysteine 95. Positions 185 to 295 are disordered; the sequence is ISQSKLDEPE…EDVERVSKKI (111 aa). Position 186 is a phosphoserine (serine 186). Over residues 189 to 200 the composition is skewed to basic and acidic residues; sequence KLDEPESNKDMA. Composition is skewed to acidic residues over residues 207 to 226 and 234 to 265; these read SDLD…DYDD and EDDD…DSID. The segment covering 269–279 has biased composition (basic and acidic residues); it reads VMDRKQPHKAE. A phosphoserine mark is found at serine 282 and serine 292.

It belongs to the ubiquitin-conjugating enzyme family. As to quaternary structure, interacts with CDC53. Component of the E3 ubiquitin ligase complexes SCF with CDC53, SKP1/CBF3D, HRT1 and some F-box proteins like MET30 and CDC4.

It localises to the cytoplasm. Its subcellular location is the nucleus. The catalysed reaction is S-ubiquitinyl-[E1 ubiquitin-activating enzyme]-L-cysteine + [E2 ubiquitin-conjugating enzyme]-L-cysteine = [E1 ubiquitin-activating enzyme]-L-cysteine + S-ubiquitinyl-[E2 ubiquitin-conjugating enzyme]-L-cysteine.. It participates in protein modification; protein ubiquitination. Catalyzes the covalent attachment of ubiquitin to other proteins. Capable, in vitro, to ubiquitinate histone H2A. Its function is as follows. Mediates the initiation of DNA replication (transition of G1 to S phase in cell cycle). Essential component of the E3 ubiquitin ligase complex SCF (SKP1-CUL1-F-box protein), which mediates the ubiquitination and subsequent proteasomal degradation of target proteins. Involved in the regulation of methionine biosynthesis genes and in the degradation of CDC6 together with CDC4 and CDC53. The protein is Ubiquitin-conjugating enzyme E2-34 kDa (CDC34) of Saccharomyces cerevisiae (strain ATCC 204508 / S288c) (Baker's yeast).